The chain runs to 294 residues: Probable 2-(5''-triphosphoribosyl)-3'-dephosphocoenzyme-A synthase (294 aa).

Belongs to the CitG/MdcB family.

It catalyses the reaction 3'-dephospho-CoA + ATP = 2'-(5''-triphospho-alpha-D-ribosyl)-3'-dephospho-CoA + adenine. The polypeptide is Probable 2-(5''-triphosphoribosyl)-3'-dephosphocoenzyme-A synthase (Streptococcus pyogenes serotype M49 (strain NZ131)).